A 364-amino-acid polypeptide reads, in one-letter code: MMLPSPVTSTPFSVKDILNLEQQHQHFHGAHLQADLEHHFHSAPCMLAAAEGTQFSDGGEEDEEDEGEKLSYLNSLAAADGHGDSGLCPQGYVHTVLRDSCSEPKEHEEEPEVVRDRSQKSCQLKKSLETAGDCKAAEESERPKPRSRRKPRVLFSQAQVFELERRFKQQRYLSAPEREHLASSLKLTSTQVKIWFQNRRYKCKRQRQDKSLELGAHAPPPPPRRVAVPVLVRDGKPCVTPSAQAYGAPYSVGASAYSYNSFPAYGYGNSAAAAAAAAAAAAAAAAYSSSYGCAYPAGGGGGGGGTSAATTAMQPACSAAGGGPFVNVSNLGGFGSGGSAQPLHQGTAAGAACAQGTLQGIRAW.

The disordered stretch occupies residues 132-153 (GDCKAAEESERPKPRSRRKPRV). The segment covering 135–144 (KAAEESERPK) has biased composition (basic and acidic residues). The segment at residues 148–207 (RRKPRVLFSQAQVFELERRFKQQRYLSAPEREHLASSLKLTSTQVKIWFQNRRYKCKRQR) is a DNA-binding region (homeobox).

This sequence belongs to the NK-2 homeobox family.

The protein localises to the nucleus. In terms of biological role, transcription factor. The chain is Homeobox protein Nkx-2.3 (NKX2-3) from Homo sapiens (Human).